A 202-amino-acid polypeptide reads, in one-letter code: Transmembrane 4 L6 family member 4 (202 aa).

The Cytoplasmic portion of the chain corresponds to 1–9; that stretch reads MCTGGCARC. A helical membrane pass occupies residues 10–30; sequence LGGTLIPLAFFGFLANILLFF. The Extracellular portion of the chain corresponds to 31-45; that stretch reads PGGKVIDDNDHLSQE. The helical transmembrane segment at 46-66 threads the bilayer; it reads IWFFGGILGSGVLMIFPALVF. Topologically, residues 67 to 93 are cytoplasmic; the sequence is LGLKNNDCCGCCGNEGCGKRFAMFTST. A helical membrane pass occupies residues 94-114; the sequence is IFAVVGFLGAGYSFIISAISI. The Extracellular portion of the chain corresponds to 115–158; that stretch reads NKGPKCLMANSTWGYPFHDGDYLNDEALWNKCREPLNVVPWNLT. N-linked (GlcNAc...) asparagine glycans are attached at residues N124 and N156. Residues 159–179 form a helical membrane-spanning segment; the sequence is LFSILLVVGGIQMVLCAIQVV. At 180-202 the chain is on the cytoplasmic side; it reads NGLLGTLCGDCQCCGCCGGDGPV.

It belongs to the L6 tetraspanin family. Post-translationally, N-glycosylated. Glycosylation is required for the growth inhibitory effect. As to expression, jejunum and liver.

It localises to the membrane. Functionally, regulates the adhesive and proliferative status of intestinal epithelial cells. Can mediate density-dependent cell proliferation. In Homo sapiens (Human), this protein is Transmembrane 4 L6 family member 4 (TM4SF4).